Reading from the N-terminus, the 150-residue chain is UPF0039 protein C11D3.02c (150 aa).

Positions 9–150 (KYFNSLDVKE…IPHVEMRLEL (142 aa)) constitute an N-acetyltransferase domain.

This sequence belongs to the UPF0039 (ElaA) family.

The protein is UPF0039 protein C11D3.02c of Schizosaccharomyces pombe (strain 972 / ATCC 24843) (Fission yeast).